The primary structure comprises 259 residues: MQQMVPASGYDRAITIFSPEGRLYQVEYAREAVRRGTTAVGIKCKDGVVLAVDRRITSKLIDVSSIEKIFQIDDHIVAATSGLVADARVLIDRARLEAQMNRISYGEAITVEALAKKICDIKQAYTQHGGARPFGLALLITGIDRHSARLFETDPSGALIEYKATAIGSGRPIAMEVLESKYDENMTVNEGMELALYALSKTTEELKPENIDMAIVKDSGKLVEKISVDEIEKIVKAVYKKVEAEEAEAEKNKGEEDIE.

This sequence belongs to the peptidase T1A family. The 20S proteasome core is composed of 14 alpha and 14 beta subunits that assemble into four stacked heptameric rings, resulting in a barrel-shaped structure. The two inner rings, each composed of seven catalytic beta subunits, are sandwiched by two outer rings, each composed of seven alpha subunits. The catalytic chamber with the active sites is on the inside of the barrel. Has a gated structure, the ends of the cylinder being occluded by the N-termini of the alpha-subunits. Is capped at one or both ends by the proteasome regulatory ATPase, PAN.

Its subcellular location is the cytoplasm. With respect to regulation, the formation of the proteasomal ATPase PAN-20S proteasome complex, via the docking of the C-termini of PAN into the intersubunit pockets in the alpha-rings, triggers opening of the gate for substrate entry. Interconversion between the open-gate and close-gate conformations leads to a dynamic regulation of the 20S proteasome proteolysis activity. Component of the proteasome core, a large protease complex with broad specificity involved in protein degradation. This chain is Proteasome subunit alpha, found in Methanococcus maripaludis (strain C7 / ATCC BAA-1331).